A 192-amino-acid chain; its full sequence is Potassium channel HX13_20290 (192 aa).

The chain crosses the membrane as a helical span at residues 1–24 (MTKGRLEAFSDGVLAIIITIMVLE). Residues 5-11 (RLEAFSD) carry the RxxxFSD motif motif. Position 25 (L25) is a topological domain, cytoplasmic. Residues 26–29 (KVPE) are short helix H1. At 26-39 (KVPEGSSWASLQPI) the chain is on the extracellular side. The segment at 31–37 (SSWASLQ) is short helix H2. Residues 40–65 (LPRFLAYIFSFIYVGIYWNNHHHLFQ) form a helical membrane-spanning segment. Residues 66–71 (TVKKVN) are Cytoplasmic-facing. The helical transmembrane segment at 72-93 (GSILWANLHLLFWLSLMPIATE) threads the bilayer. The Extracellular portion of the chain corresponds to 94–101 (WIGTSHFA). The helical transmembrane segment at 102–126 (QNPVATYGIGLIMSAIAYTILENVI) threads the bilayer. The Cytoplasmic portion of the chain corresponds to 127 to 133 (IRCEGEN). The chain crosses the membrane as a helical span at residues 134 to 162 (SKLKEAIHSKFKEYISIIFYVLGIATSFF). The Extracellular portion of the chain corresponds to 163–164 (YP). A helical membrane pass occupies residues 165-180 (YIAIGFYYLVALIWLI). At 181–192 (PDKRIEKSLKEN) the chain is on the cytoplasmic side.

It belongs to the TMEM175 family. As to quaternary structure, homotetramer.

It is found in the membrane. The enzyme catalyses K(+)(in) = K(+)(out). Potassium channel. This chain is Potassium channel HX13_20290, found in Chryseobacterium sp. (strain P1-3).